The following is a 151-amino-acid chain: Large ribosomal subunit protein uL15 (151 aa).

Residues 37 to 57 (GMRGQKSRSGRPTRPGFEGGQ) form a disordered region.

This sequence belongs to the universal ribosomal protein uL15 family. Part of the 50S ribosomal subunit.

Binds to the 23S rRNA. The protein is Large ribosomal subunit protein uL15 of Prochlorococcus marinus (strain MIT 9313).